Here is a 78-residue protein sequence, read N- to C-terminus: Dihydrofolate reductase type 2 (78 aa).

Residues lysine 32 and 66-69 (VQIY) contribute to the NADP(+) site. A substrate-binding site is contributed by isoleucine 68.

In terms of assembly, homotetramer.

The catalysed reaction is (6S)-5,6,7,8-tetrahydrofolate + NADP(+) = 7,8-dihydrofolate + NADPH + H(+). The protein operates within cofactor biosynthesis; tetrahydrofolate biosynthesis; 5,6,7,8-tetrahydrofolate from 7,8-dihydrofolate: step 1/1. Its function is as follows. Key enzyme in folate metabolism. Catalyzes an essential reaction for de novo glycine and purine synthesis, and for DNA precursor synthesis. The protein is Dihydrofolate reductase type 2 of Escherichia coli.